The chain runs to 336 residues: Dihydroorotate dehydrogenase (quinone) (336 aa).

Residues 62–66 (AGLDK) and Thr-86 contribute to the FMN site. Residue Lys-66 participates in substrate binding. 111-115 (NRMGF) contacts substrate. The FMN site is built by Asn-139 and Asn-172. Asn-172 provides a ligand contact to substrate. The active-site Nucleophile is the Ser-175. A substrate-binding site is contributed by Asn-177. FMN-binding residues include Lys-217 and Thr-245. 246 to 247 (NT) contacts substrate. Residues Gly-268, Gly-297, and 318-319 (YS) each bind FMN.

Belongs to the dihydroorotate dehydrogenase family. Type 2 subfamily. Monomer. FMN serves as cofactor.

Its subcellular location is the cell membrane. The catalysed reaction is (S)-dihydroorotate + a quinone = orotate + a quinol. The protein operates within pyrimidine metabolism; UMP biosynthesis via de novo pathway; orotate from (S)-dihydroorotate (quinone route): step 1/1. Its function is as follows. Catalyzes the conversion of dihydroorotate to orotate with quinone as electron acceptor. This chain is Dihydroorotate dehydrogenase (quinone), found in Sodalis glossinidius (strain morsitans).